Here is a 260-residue protein sequence, read N- to C-terminus: Methylesterase 7 (260 aa).

The active-site Acyl-ester intermediate is Ser84. Residues Asp210 and His238 each act as charge relay system in the active site.

The protein belongs to the AB hydrolase superfamily. Methylesterase family.

It catalyses the reaction methyl (indol-3-yl)acetate + H2O = (indol-3-yl)acetate + methanol + H(+). The enzyme catalyses methyl salicylate + H2O = salicylate + methanol + H(+). The protein operates within plant hormone biosynthesis. Its activity is regulated as follows. Esterase activity is down-regulated by salicylic acid (SA). In terms of biological role, methylesterase shown to have carboxylesterase activity, methyl indole-3-acetic acid (MeIAA) esterase activity and methyl salicylate (MeSA) esterase activity in vitro. Required to convert methyl salicylate (MeSA) to salicylic acid (SA) as part of the signal transduction pathways that activate systemic acquired resistance in systemic tissue. MeSA is believed to be an inactive form that needs to be demethylated to exert a biological effect. The polypeptide is Methylesterase 7 (Arabidopsis thaliana (Mouse-ear cress)).